The primary structure comprises 424 residues: Serine hydroxymethyltransferase (424 aa).

(6S)-5,6,7,8-tetrahydrofolate-binding positions include Leu118 and 122–124 (GHL). Position 227 is an N6-(pyridoxal phosphate)lysine (Lys227). Residues Glu243 and 351 to 353 (SPF) contribute to the (6S)-5,6,7,8-tetrahydrofolate site.

The protein belongs to the SHMT family. Homodimer. Pyridoxal 5'-phosphate is required as a cofactor.

The protein resides in the cytoplasm. It carries out the reaction (6R)-5,10-methylene-5,6,7,8-tetrahydrofolate + glycine + H2O = (6S)-5,6,7,8-tetrahydrofolate + L-serine. It functions in the pathway one-carbon metabolism; tetrahydrofolate interconversion. Its pathway is amino-acid biosynthesis; glycine biosynthesis; glycine from L-serine: step 1/1. Functionally, catalyzes the reversible interconversion of serine and glycine with tetrahydrofolate (THF) serving as the one-carbon carrier. This reaction serves as the major source of one-carbon groups required for the biosynthesis of purines, thymidylate, methionine, and other important biomolecules. Also exhibits THF-independent aldolase activity toward beta-hydroxyamino acids, producing glycine and aldehydes, via a retro-aldol mechanism. This chain is Serine hydroxymethyltransferase, found in Thermosipho africanus (strain TCF52B).